The sequence spans 104 residues: Replication restart protein PriB (104 aa).

Residues methionine 1–aspartate 101 enclose the SSB domain.

It belongs to the PriB family. As to quaternary structure, homodimer. Interacts with PriA and DnaT. Component of the replication restart primosome. Primosome assembly occurs via a 'hand-off' mechanism. PriA binds to replication forks, subsequently PriB then DnaT bind; DnaT then displaces ssDNA to generate the helicase loading substrate.

Its function is as follows. Involved in the restart of stalled replication forks, which reloads the replicative helicase on sites other than the origin of replication; the PriA-PriB pathway is the major replication restart pathway. During primosome assembly it facilitates complex formation between PriA and DnaT on DNA; stabilizes PriA on DNA. Stimulates the DNA unwinding activity of PriA helicase. The polypeptide is Replication restart protein PriB (Salmonella typhi).